Here is an 874-residue protein sequence, read N- to C-terminus: Alanine--tRNA ligase (874 aa).

The Zn(2+) site is built by His-562, His-566, Cys-663, and His-667.

It belongs to the class-II aminoacyl-tRNA synthetase family. Zn(2+) is required as a cofactor.

The protein resides in the cytoplasm. It catalyses the reaction tRNA(Ala) + L-alanine + ATP = L-alanyl-tRNA(Ala) + AMP + diphosphate. In terms of biological role, catalyzes the attachment of alanine to tRNA(Ala) in a two-step reaction: alanine is first activated by ATP to form Ala-AMP and then transferred to the acceptor end of tRNA(Ala). Also edits incorrectly charged Ser-tRNA(Ala) and Gly-tRNA(Ala) via its editing domain. This chain is Alanine--tRNA ligase, found in Bordetella parapertussis (strain 12822 / ATCC BAA-587 / NCTC 13253).